The chain runs to 475 residues: MPREIITLQVGQCGNQIGMEFWKQLCLEHGISKDGILEDFATQGGDRKDVFFYQADDEHYIPRALLIDLEPRVINSIQNSEYRNLYNHENVFVADHGGGAGNNWASGYHQGEQVEEDIMDMIDREADGSDSLEGFVLCHSIAGGTGSGMGSYLLEALNDRYSKKLVQTYSVFPNQMETSDVVVQPYNSLLTLKRLTLNADCVVVLDNTALNRIAVDRLHIPNPTFAQTNSLVSTVMSASTTTLRYPGYMNNDLVGLVASLIPTPRCHFLMTGYTPLTVERQANAIRKTTVLDVMRRLLQAKNIMVSSYARTKEASQAKYISILNIIQGEVDPTQVHKSLQRIRERKLANFIEWGPASIQVALSRKSPYVQTAHRVSGLMLASHTSIRHLFSKCISQYEKLRKKQAFLDNYRKFPMFADNDLSEFDESREIVQNLVDEYKACESADYIKWGMEDRGKQVSGEGNTSGTVDSRVGAS.

Position 142-148 (142-148) interacts with GTP; it reads AGGTGSG. A disordered region spans residues 455 to 475; it reads GKQVSGEGNTSGTVDSRVGAS.

The protein belongs to the tubulin family.

The protein localises to the cytoplasm. Its subcellular location is the cytoskeleton. It is found in the microtubule organizing center. Tubulin is the major constituent of microtubules. The gamma chain is found at microtubule organizing centers (MTOC) such as the spindle poles, suggesting that it is involved in the minus-end nucleation of microtubule assembly. This Physcomitrium patens (Spreading-leaved earth moss) protein is Tubulin gamma chain (TUBG1).